The following is a 237-amino-acid chain: Ribonuclease PH (237 aa).

Residues R86 and 124–126 (GTR) each bind phosphate.

It belongs to the RNase PH family. As to quaternary structure, homohexameric ring arranged as a trimer of dimers.

The enzyme catalyses tRNA(n+1) + phosphate = tRNA(n) + a ribonucleoside 5'-diphosphate. In terms of biological role, phosphorolytic 3'-5' exoribonuclease that plays an important role in tRNA 3'-end maturation. Removes nucleotide residues following the 3'-CCA terminus of tRNAs; can also add nucleotides to the ends of RNA molecules by using nucleoside diphosphates as substrates, but this may not be physiologically important. Probably plays a role in initiation of 16S rRNA degradation (leading to ribosome degradation) during starvation. This is Ribonuclease PH from Xanthobacter autotrophicus (strain ATCC BAA-1158 / Py2).